We begin with the raw amino-acid sequence, 459 residues long: Putrescine aminotransferase (459 aa).

Pyridoxal 5'-phosphate is bound by residues 150-151 and Gln-274; that span reads GT. Lys-300 carries the N6-(pyridoxal phosphate)lysine modification. Thr-332 is a pyridoxal 5'-phosphate binding site.

Belongs to the class-III pyridoxal-phosphate-dependent aminotransferase family. Putrescine aminotransferase subfamily. The cofactor is pyridoxal 5'-phosphate.

The enzyme catalyses an alkane-alpha,omega-diamine + 2-oxoglutarate = an omega-aminoaldehyde + L-glutamate. It carries out the reaction putrescine + 2-oxoglutarate = 1-pyrroline + L-glutamate + H2O. It catalyses the reaction cadaverine + 2-oxoglutarate = 5-aminopentanal + L-glutamate. It functions in the pathway amine and polyamine degradation; putrescine degradation; 4-aminobutanal from putrescine (transaminase route): step 1/1. Its function is as follows. Catalyzes the aminotransferase reaction from putrescine to 2-oxoglutarate, leading to glutamate and 4-aminobutanal, which spontaneously cyclizes to form 1-pyrroline. This is the first step in one of two pathways for putrescine degradation, where putrescine is converted into 4-aminobutanoate (gamma-aminobutyrate or GABA) via 4-aminobutanal. Also functions as a cadaverine transaminase in a a L-lysine degradation pathway to succinate that proceeds via cadaverine, glutarate and L-2-hydroxyglutarate. The sequence is that of Putrescine aminotransferase from Salmonella agona (strain SL483).